The sequence spans 400 residues: Argininosuccinate synthase (400 aa).

Residue 8 to 16 (AYSGGLDTS) coordinates ATP. Residue tyrosine 87 participates in L-citrulline binding. Glycine 117 serves as a coordination point for ATP. L-aspartate-binding residues include threonine 119, asparagine 123, and aspartate 124. Asparagine 123 provides a ligand contact to L-citrulline. Residues arginine 127, serine 175, glutamate 260, and tyrosine 272 each contribute to the L-citrulline site.

Belongs to the argininosuccinate synthase family. Type 1 subfamily. Homotetramer.

The protein resides in the cytoplasm. The enzyme catalyses L-citrulline + L-aspartate + ATP = 2-(N(omega)-L-arginino)succinate + AMP + diphosphate + H(+). The protein operates within amino-acid biosynthesis; L-arginine biosynthesis; L-arginine from L-ornithine and carbamoyl phosphate: step 2/3. In Mycolicibacterium gilvum (strain PYR-GCK) (Mycobacterium gilvum (strain PYR-GCK)), this protein is Argininosuccinate synthase.